Here is a 98-residue protein sequence, read N- to C-terminus: MKAIVFVLIFAVAFAVTATHQGEILCNLCTGLINTLENLLTTKGADKVKDYISSLCNKASGFIATLCTKVLDFGIDKLIQLIEDKVDANAICAKIHAC.

The first 21 residues, 1–21, serve as a signal peptide directing secretion; the sequence is MKAIVFVLIFAVAFAVTATHQ. The Saposin B-type domain occupies 22–98; sequence GEILCNLCTG…NAICAKIHAC (77 aa). Intrachain disulfides connect Cys26–Cys98, Cys29–Cys92, and Cys56–Cys67.

Monomer (at pH below 4 and pH above 6). Homodimer (at pH 4-6). Hexamer; formed during insertion in the membrane.

The protein resides in the cytoplasmic granule. Its function is as follows. Forms pores in the cell membrane of host cells. Has antibacterial activity against M.luteus, no activity against E.coli. Implicated in the cytolytic activity of the parasite. In Entamoeba histolytica (strain ATCC 30459 / HM-1:IMSS / ABRM), this protein is Pore-forming peptide amoebapore A.